Reading from the N-terminus, the 523-residue chain is Mogroside I-A1 synthase (523 aa).

His39 (proton acceptor) is an active-site residue. The active-site Charge relay is Asp136. UDP-alpha-D-glucose contacts are provided by Ser311, Gln374, Trp392, Asn393, Ser394, Glu397, Asp413, and Gln414.

The protein belongs to the UDP-glycosyltransferase family. Highly expressed in young fruits 15 and 34 days after anthesis (15-DAA and 34-DAA).

The enzyme catalyses mogrol + UDP-alpha-D-glucose = mogroside I-A1 + UDP + H(+). It catalyses the reaction mogroside I-A1 + UDP-alpha-D-glucose = mogroside IIE + UDP + H(+). The catalysed reaction is mogroside IE + UDP-alpha-D-glucose = mogroside IIE + UDP + H(+). It carries out the reaction mogroside II-A1 + UDP-alpha-D-glucose = mogroside IIIX + UDP + H(+). The enzyme catalyses mogroside II-A + UDP-alpha-D-glucose = mogroside III + UDP + H(+). It catalyses the reaction mogroside IIE + UDP-alpha-D-glucose = mogroside III-C3(1-&gt;6) + UDP + H(+). The catalysed reaction is mogroside III + UDP-alpha-D-glucose = isomogroside IV + UDP + H(+). It carries out the reaction mogroside III + UDP-alpha-D-glucose = mogroside IV + UDP + H(+). The enzyme catalyses mogroside IIIX + UDP-alpha-D-glucose = mogroside IVA + UDP + H(+). It catalyses the reaction siamenoside I + UDP-alpha-D-glucose = isomogroside V + UDP + H(+). It functions in the pathway secondary metabolite biosynthesis; terpenoid biosynthesis. UDP-glycosyltransferase involved in the biosynthesis of cucurbitacin and mogroside tetracyclic triterpene natural products (e.g. siamenoside I and mogrosides IV, V and VI). Cucurbitacins have cytotoxic properties and exhibit deterrent taste as a defense barrier against herbivores. Mogrosides are nonsugar highly oxygenated compounds used as high-intensity zero-calorie sweeteners; they also possess pharmacological properties such as regulating immunity, lowering blood sugar and lipid levels, protecting the liver, and acting as antioxidants and antitumor agents. Catalyzes the C24 primary glucosylation of mogrol and mogroside I-E1, and the C3 primary glucosylation of mogroside I-A1, mogroside II-A1 and mogroside II-A. Also supports branching glucosylations of mogroside II-E, mogroside III, mogroside IIIx and siamenoside I. This Siraitia grosvenorii (Monk's fruit) protein is Mogroside I-A1 synthase.